The chain runs to 594 residues: Protein FAM200C (594 aa).

In Homo sapiens (Human), this protein is Protein FAM200C.